The chain runs to 356 residues: tRNA-specific 2-thiouridylase MnmA (356 aa).

Position 6-13 (6-13) interacts with ATP; the sequence is AVSGGTDS. C95 functions as the Nucleophile in the catalytic mechanism. Cysteines 95 and 195 form a disulfide. An ATP-binding site is contributed by G119. Residues 145 to 147 form an interaction with tRNA region; that stretch reads KDQ. The active-site Cysteine persulfide intermediate is the C195. The segment at 300-301 is interaction with tRNA; it reads RY.

Belongs to the MnmA/TRMU family.

It is found in the cytoplasm. The enzyme catalyses S-sulfanyl-L-cysteinyl-[protein] + uridine(34) in tRNA + AH2 + ATP = 2-thiouridine(34) in tRNA + L-cysteinyl-[protein] + A + AMP + diphosphate + H(+). Functionally, catalyzes the 2-thiolation of uridine at the wobble position (U34) of tRNA, leading to the formation of s(2)U34. This is tRNA-specific 2-thiouridylase MnmA from Oleidesulfovibrio alaskensis (strain ATCC BAA-1058 / DSM 17464 / G20) (Desulfovibrio alaskensis).